The sequence spans 194 residues: ATP-dependent Clp protease proteolytic subunit 3 (194 aa).

The active-site Nucleophile is S96. Residue H121 is part of the active site.

The protein belongs to the peptidase S14 family. Fourteen ClpP subunits assemble into 2 heptameric rings which stack back to back to give a disk-like structure with a central cavity, resembling the structure of eukaryotic proteasomes.

It is found in the cytoplasm. It carries out the reaction Hydrolysis of proteins to small peptides in the presence of ATP and magnesium. alpha-casein is the usual test substrate. In the absence of ATP, only oligopeptides shorter than five residues are hydrolyzed (such as succinyl-Leu-Tyr-|-NHMec, and Leu-Tyr-Leu-|-Tyr-Trp, in which cleavage of the -Tyr-|-Leu- and -Tyr-|-Trp bonds also occurs).. Cleaves peptides in various proteins in a process that requires ATP hydrolysis. Has a chymotrypsin-like activity. Plays a major role in the degradation of misfolded proteins. This Rhizobium etli (strain ATCC 51251 / DSM 11541 / JCM 21823 / NBRC 15573 / CFN 42) protein is ATP-dependent Clp protease proteolytic subunit 3.